Consider the following 324-residue polypeptide: MTIRSVVLGCGSYLPQRVVTNAELASRIETSDDWIVQRTGIRERHVAAEGEFTSHLAINAARAALAAADVDPQSIDLIVLGTSTPDNTFPATAVAVQDGLGIHHGAAFDLQAVCSGFVYALATADNFLRSGSFKRALVIGAETFSRILDWNDRTTCVLFGDGAGALVLDAQRQDGTSADRGVLTTHLRSDGRHKAKLYVDGGPSSTQTVGHLRMEGREVFKHAVGMITDVIVDAFEATGLSAETIDWFVPHQANKRIIDASAHKLHIAPEKVVLTVDRHGNTSAASIPLALDVAVKDGRIKKGDVVLLEAMGGGFTWGSALVRW.

Catalysis depends on residues C114 and H251. An ACP-binding region spans residues 252–256 (QANKR). N281 is a catalytic residue.

This sequence belongs to the thiolase-like superfamily. FabH family. As to quaternary structure, homodimer.

Its subcellular location is the cytoplasm. The catalysed reaction is malonyl-[ACP] + acetyl-CoA + H(+) = 3-oxobutanoyl-[ACP] + CO2 + CoA. The protein operates within lipid metabolism; fatty acid biosynthesis. Catalyzes the condensation reaction of fatty acid synthesis by the addition to an acyl acceptor of two carbons from malonyl-ACP. Catalyzes the first condensation reaction which initiates fatty acid synthesis and may therefore play a role in governing the total rate of fatty acid production. Possesses both acetoacetyl-ACP synthase and acetyl transacylase activities. Its substrate specificity determines the biosynthesis of branched-chain and/or straight-chain of fatty acids. In Bradyrhizobium sp. (strain BTAi1 / ATCC BAA-1182), this protein is Beta-ketoacyl-[acyl-carrier-protein] synthase III.